The chain runs to 450 residues: Glucose-6-phosphate isomerase (450 aa).

At threonine 39 the chain carries Phosphothreonine. Glutamate 291 functions as the Proton donor in the catalytic mechanism. Active-site residues include histidine 312 and lysine 426.

Belongs to the GPI family.

It is found in the cytoplasm. The enzyme catalyses alpha-D-glucose 6-phosphate = beta-D-fructose 6-phosphate. The protein operates within carbohydrate biosynthesis; gluconeogenesis. Its pathway is carbohydrate degradation; glycolysis; D-glyceraldehyde 3-phosphate and glycerone phosphate from D-glucose: step 2/4. Its function is as follows. Catalyzes the reversible isomerization of glucose-6-phosphate to fructose-6-phosphate. The chain is Glucose-6-phosphate isomerase from Bacillus cytotoxicus (strain DSM 22905 / CIP 110041 / 391-98 / NVH 391-98).